A 367-amino-acid chain; its full sequence is 2'-5'-oligoadenylate synthase 1A (367 aa).

The segment at 14–61 (DKFIEDYLLPDTTFGADVKSAVNVVCDFLKERCFQGAAHPVRVSKVVK) is interaction with dsRNA. Ser64 provides a ligand contact to ATP. Mg(2+) contacts are provided by Asp76, Asp78, and Asp149. The interaction with dsRNA stretch occupies residues 201–211 (QRPTKLKSLIR). Residues Arg211, Lys214, and Gln231 each coordinate ATP. Residue Cys364 is the site of S-geranylgeranyl cysteine attachment.

The protein belongs to the 2-5A synthase family. As to quaternary structure, monomer. Homotetramer. Interacts with OAS1D; the interaction inhibits OAS1A catalytic activity. Mg(2+) is required as a cofactor. Post-translationally, C-terminal prenylated. Expressed in oocytes and granulosa cells of ovary, in intestine, stomach, spleen and uterus (at protein level). Expressed at high levels in the digestive tract and lymphoid organs. Expressed in ovary and spleen.

It localises to the cytoplasm. It is found in the mitochondrion. The protein resides in the nucleus. The protein localises to the microsome. Its subcellular location is the endoplasmic reticulum. The enzyme catalyses 3 ATP = 5'-triphosphoadenylyl-(2'-&gt;5')-adenylyl-(2'-&gt;5')-adenosine + 2 diphosphate. With respect to regulation, produced as a latent enzyme which is activated by dsRNA generated during the course of viral infection. The dsRNA activator must be at least 15 nucleotides long, and no modification of the 2'-hydroxyl group is tolerated. ssRNA or dsDNA do not act as activators. Interferon-induced, dsRNA-activated antiviral enzyme which plays a critical role in cellular innate antiviral response. In addition, it may also play a role in other cellular processes such as apoptosis, cell growth, differentiation and gene regulation. Synthesizes higher oligomers of 2'-5'-oligoadenylates (2-5A) from ATP which then bind to the inactive monomeric form of ribonuclease L (RNase L) leading to its dimerization and subsequent activation. Activation of RNase L leads to degradation of cellular as well as viral RNA, resulting in the inhibition of protein synthesis, thus terminating viral replication. Can mediate the antiviral effect via the classical RNase L-dependent pathway or an alternative antiviral pathway independent of RNase L. In Mus musculus (Mouse), this protein is 2'-5'-oligoadenylate synthase 1A (Oas1a).